An 833-amino-acid chain; its full sequence is Leucine--tRNA ligase (833 aa).

Positions P41–H52 match the 'HIGH' region motif. Positions K610 to S614 match the 'KMSKS' region motif. Residue K613 participates in ATP binding.

This sequence belongs to the class-I aminoacyl-tRNA synthetase family.

The protein resides in the cytoplasm. It carries out the reaction tRNA(Leu) + L-leucine + ATP = L-leucyl-tRNA(Leu) + AMP + diphosphate. The chain is Leucine--tRNA ligase from Streptococcus agalactiae serotype III (strain NEM316).